Reading from the N-terminus, the 290-residue chain is GTPase Era (290 aa).

The region spanning lysine 2–glutamate 169 is the Era-type G domain. Positions glycine 10–serine 17 are G1. Glycine 10–serine 17 contacts GTP. The G2 stretch occupies residues glutamine 36–asparagine 40. Residues aspartate 57 to glycine 60 are G3. GTP contacts are provided by residues aspartate 57–phenylalanine 61 and asparagine 119–aspartate 122. The tract at residues asparagine 119–aspartate 122 is G4. Positions isoleucine 148–alanine 150 are G5. A KH type-2 domain is found at leucine 200–lysine 276.

The protein belongs to the TRAFAC class TrmE-Era-EngA-EngB-Septin-like GTPase superfamily. Era GTPase family. As to quaternary structure, monomer.

The protein localises to the cytoplasm. The protein resides in the cell inner membrane. Functionally, an essential GTPase that binds both GDP and GTP, with rapid nucleotide exchange. Plays a role in 16S rRNA processing and 30S ribosomal subunit biogenesis and possibly also in cell cycle regulation and energy metabolism. This chain is GTPase Era, found in Borrelia duttonii (strain Ly).